Consider the following 312-residue polypeptide: MANIVFKLSDKDITTLMSRITFDTENLPQGMKARAKYQNTTVNIYQSGKVMFQGNHAEAVSKELLPQHSQLNTNKTKKKNMANSSLEQTLMYDQFNCIGSDEAGSGDYFGPLTVCAAFVTKEHVPILKTLGVDDSKKLTDTKIVELAEQLVAFIPHSLLTLHNDKYNIQQAKGWTQVKMKAVLHNEAIKNVLEKIDSSQLDYIVIDQFAKREVYSHYALSDIPLPKKTKFETKGESKSLAIAVASIISRYAFITYMDQISKYINMTIPKGAGAKVDVIAAKIIKKYGLSRLDTISKKHFKNREKAQKILKPL.

Residues 95 to 311 (FNCIGSDEAG…REKAQKILKP (217 aa)) form the RNase H type-2 domain. Residues Asp101, Glu102, and Asp206 each coordinate a divalent metal cation.

It belongs to the RNase HII family. RnhC subfamily. It depends on Mn(2+) as a cofactor. Mg(2+) serves as cofactor.

It is found in the cytoplasm. The enzyme catalyses Endonucleolytic cleavage to 5'-phosphomonoester.. In terms of biological role, endonuclease that specifically degrades the RNA of RNA-DNA hybrids. The sequence is that of Ribonuclease HIII from Staphylococcus aureus (strain Mu3 / ATCC 700698).